A 372-amino-acid chain; its full sequence is MAKKRVVIGMSGGVDSSVSAWLLKEQGYEVIGLFMKNWEDDDDSEYCSTRQDWIDAASVADVVGVDIEAVNFASEYKDRVFAEFLREYQAGRTPNPDVLCNAEIKFKAFLDHAMLLGADMIATGHYARVREVTSGPDAGRVELLKAVDASKDQSYFLHRLNQAQLAKTLFPLGEIRKTEVRKIAEQLKLPNATKKDSTGICFIGERPFREFLNRYLSYQPGPMKTPEGVIVGEHVGLSFYTLGQRKGIGLGGMKSHKNTDGNSEPWYVARKDVATNTLYIVQGHDHPWLLSSELSAGQMSWVAGSPPSEELVSAKTRYRQADVACSQRSDADGFSLAFAAPQWAVTPGQSAVLYQGDVCLGGGIINTSAVPA.

ATP contacts are provided by residues 9–16 (GMSGGVDS) and methionine 35. Residues 95 to 97 (NPD) are interaction with target base in tRNA. Residue cysteine 100 is the Nucleophile of the active site. Cysteines 100 and 201 form a disulfide. An ATP-binding site is contributed by glycine 124. The tract at residues 151–153 (KDQ) is interaction with tRNA. The active-site Cysteine persulfide intermediate is the cysteine 201. An interaction with tRNA region spans residues 317–318 (RY).

It belongs to the MnmA/TRMU family.

Its subcellular location is the cytoplasm. The catalysed reaction is S-sulfanyl-L-cysteinyl-[protein] + uridine(34) in tRNA + AH2 + ATP = 2-thiouridine(34) in tRNA + L-cysteinyl-[protein] + A + AMP + diphosphate + H(+). Functionally, catalyzes the 2-thiolation of uridine at the wobble position (U34) of tRNA, leading to the formation of s(2)U34. This is tRNA-specific 2-thiouridylase MnmA from Janthinobacterium sp. (strain Marseille) (Minibacterium massiliensis).